Consider the following 306-residue polypeptide: Polyadenylate-binding protein 2 (306 aa).

Low complexity predominate over residues 1–12; that stretch reads MAAAAAAAAAAG. The interval 1–115 is disordered; it reads MAAAAAAAAA…EGDPGDGAIE (115 aa). N-acetylalanine is present on alanine 2. An interaction with SKIP region spans residues 2–145; sequence AAAAAAAAAA…LKELQNEVEK (144 aa). At arginine 17 the chain carries Omega-N-methylarginine. Position 19 is a phosphoserine (serine 19). Gly residues predominate over residues 30-47; that stretch reads GAGGEAGEGAPGGAGDYG. A compositionally biased stretch (acidic residues) spans 51-72; the sequence is ESEELEPEELLLEPEPEPEPEE. Serine 52 carries the post-translational modification Phosphoserine. A compositionally biased stretch (pro residues) spans 77–87; the sequence is PRAPPGAPGPG. Residues 115 to 151 are a coiled coil; sequence EDPELEAIKARVREMEEEAEKLKELQNEVEKQMNMSP. The stimulates PAPOLA stretch occupies residues 119-147; sequence LEAIKARVREMEEEAEKLKELQNEVEKQM. Residues serine 150 and serine 235 each carry the phosphoserine modification. The tract at residues 155-306 is necessary for homooligomerization; sequence NAGPVIMSIE…ARATSWYSPY (152 aa). The RRM domain maps to 172-249; that stretch reads RSIYVGNVDY…RQIKVIPKRT (78 aa). 3 positions are modified to asymmetric dimethylarginine; alternate: arginine 238, arginine 259, and arginine 263. Residues arginine 238, arginine 259, and arginine 263 each carry the omega-N-methylarginine; alternate modification. Arginine 265, arginine 267, arginine 269, arginine 277, arginine 279, arginine 287, arginine 289, arginine 291, arginine 294, arginine 296, and arginine 298 each carry asymmetric dimethylarginine. The interval 286–306 is interaction with PAPOLA; that stretch reads SRPRGRVYRGRARATSWYSPY.

As to quaternary structure, monomer and homooligomer. Binds RNA as a monomer and oligomerizes when bound to poly(A). Associates in a ternary complex with CPSF4 and NS/NS1 and interaction with NS/NS1, blocks nuclear export of host cell mRNAs. Associates in a single complex with SKIP and MYOD1 and interacts with SKIP in differentiated myocytes. Interacts with NUDT21/CPSF5. Identified in a IGF2BP1-dependent mRNP granule complex containing untranslated mRNAs. Interacts with PAPOLA, but only in presence of oligo(A) RNA. Interacts with transportin. May interact with SETX. Interacts (via RRM domain and C-terminal arginine-rich region) with ZFP36 (via hypophosphorylated form); this interaction occurs in the nucleus in a RNA-independent manner, decreases in presence of single-stranded poly(A) RNA-oligomer and in a p38-dependent-manner and may down-regulated RNA poly(A) polymerase activity. Component of the poly(A) tail exosome targeting (PAXT) complex composed of PABPN1, ZFC3H1 and MTREX. Interacts with ZFC3H1 in a RNase-insensitive manner. Interacts with FRG1. Interacts with ZC3H11A. Arginine dimethylation is asymmetric and involves PRMT1 and PRMT3. It does not influence the RNA binding properties. As to expression, ubiquitous.

It is found in the nucleus. It localises to the cytoplasm. The protein resides in the nucleus speckle. In terms of biological role, involved in the 3'-end formation of mRNA precursors (pre-mRNA) by the addition of a poly(A) tail of 200-250 nt to the upstream cleavage product. Stimulates poly(A) polymerase (PAPOLA) conferring processivity on the poly(A) tail elongation reaction and also controls the poly(A) tail length. Increases the affinity of poly(A) polymerase for RNA. Is also present at various stages of mRNA metabolism including nucleocytoplasmic trafficking and nonsense-mediated decay (NMD) of mRNA. Cooperates with SKIP to synergistically activate E-box-mediated transcription through MYOD1 and may regulate the expression of muscle-specific genes. Binds to poly(A) and to poly(G) with high affinity. May protect the poly(A) tail from degradation. Subunit of the trimeric poly(A) tail exosome targeting (PAXT) complex, a complex that directs a subset of long and polyadenylated poly(A) RNAs for exosomal degradation. The RNA exosome is fundamental for the degradation of RNA in eukaryotic nuclei. Substrate targeting is facilitated by its cofactor MTREX, which links to RNA-binding protein adapters. In Bos taurus (Bovine), this protein is Polyadenylate-binding protein 2 (PABPN1).